Reading from the N-terminus, the 555-residue chain is CTP synthase (555 aa).

The interval 1–267 (MTKFVFVTGG…AQQVLKFMHL (267 aa)) is amidoligase domain. Residue Ser-13 participates in CTP binding. Ser-13 contributes to the UTP binding site. ATP is bound by residues 14 to 19 (SIGKGI) and Asp-71. Residues Asp-71 and Glu-141 each coordinate Mg(2+). Residues 148-150 (DIE), 188-193 (KTKPTQ), and Lys-224 contribute to the CTP site. Residues 188-193 (KTKPTQ) and Lys-224 each bind UTP. Ala-242 is an ATP binding site. Residues 299–535 (YVQLSDAYLS…VGACLADNGN (237 aa)) form the Glutamine amidotransferase type-1 domain. Gly-354 lines the L-glutamine pocket. Catalysis depends on Cys-381, which acts as the Nucleophile; for glutamine hydrolysis. L-glutamine contacts are provided by residues 382 to 385 (LGMQ), Glu-405, and Arg-463. Residues His-508 and Glu-510 contribute to the active site. The segment at 536–555 (NANHHDSTPAEPLVSEPLSS) is disordered.

The protein belongs to the CTP synthase family. Homotetramer.

The enzyme catalyses UTP + L-glutamine + ATP + H2O = CTP + L-glutamate + ADP + phosphate + 2 H(+). The catalysed reaction is L-glutamine + H2O = L-glutamate + NH4(+). It carries out the reaction UTP + NH4(+) + ATP = CTP + ADP + phosphate + 2 H(+). It participates in pyrimidine metabolism; CTP biosynthesis via de novo pathway; CTP from UDP: step 2/2. Its activity is regulated as follows. Allosterically activated by GTP, when glutamine is the substrate; GTP has no effect on the reaction when ammonia is the substrate. The allosteric effector GTP functions by stabilizing the protein conformation that binds the tetrahedral intermediate(s) formed during glutamine hydrolysis. Inhibited by the product CTP, via allosteric rather than competitive inhibition. Catalyzes the ATP-dependent amination of UTP to CTP with either L-glutamine or ammonia as the source of nitrogen. Regulates intracellular CTP levels through interactions with the four ribonucleotide triphosphates. The protein is CTP synthase of Acaryochloris marina (strain MBIC 11017).